A 265-amino-acid polypeptide reads, in one-letter code: Hydroxyethylthiazole kinase (265 aa).

Substrate is bound at residue M50. Residues R125 and T171 each contribute to the ATP site. Residue G198 coordinates substrate.

It belongs to the Thz kinase family. It depends on Mg(2+) as a cofactor.

The enzyme catalyses 5-(2-hydroxyethyl)-4-methylthiazole + ATP = 4-methyl-5-(2-phosphooxyethyl)-thiazole + ADP + H(+). Its pathway is cofactor biosynthesis; thiamine diphosphate biosynthesis; 4-methyl-5-(2-phosphoethyl)-thiazole from 5-(2-hydroxyethyl)-4-methylthiazole: step 1/1. Functionally, catalyzes the phosphorylation of the hydroxyl group of 4-methyl-5-beta-hydroxyethylthiazole (THZ). This chain is Hydroxyethylthiazole kinase, found in Salmonella paratyphi C (strain RKS4594).